A 211-amino-acid chain; its full sequence is Urease accessory protein UreF (211 aa).

The protein belongs to the UreF family. As to quaternary structure, ureD, UreF and UreG form a complex that acts as a GTP-hydrolysis-dependent molecular chaperone, activating the urease apoprotein by helping to assemble the nickel containing metallocenter of UreC. The UreE protein probably delivers the nickel.

It localises to the cytoplasm. Required for maturation of urease via the functional incorporation of the urease nickel metallocenter. The polypeptide is Urease accessory protein UreF (Mycobacterium sp. (strain JLS)).